Here is a 651-residue protein sequence, read N- to C-terminus: Transcription factor E2-alpha (651 aa).

Disordered stretches follow at residues 32 to 107 (ANGK…SERN), 131 to 208 (LSLS…KTPS), and 341 to 378 (DHSS…ALSP). Composition is skewed to low complexity over residues 56–73 (SSGS…FDPS), 131–148 (LSLS…KSSS), and 341–354 (DHSS…PSTP). Phosphoserine occurs at positions 135 and 140. At threonine 353 the chain carries Phosphothreonine. The residue at position 357 (serine 357) is a Phosphoserine. Arginine 369 carries the omega-N-methylarginine modification. Position 377 is a phosphoserine (serine 377). The tract at residues 387 to 422 (LSKMEDRLDEAIHVLRSHAVGTASDLHGLLPGHGAL) is leucine-zipper. The disordered stretch occupies residues 457-549 (HNHASLPSQP…KAEREKERRV (93 aa)). Low complexity predominate over residues 461–479 (SLPSQPSSLPDLSQRPPDS). Residue lysine 496 forms a Glycyl lysine isopeptide (Lys-Gly) (interchain with G-Cter in SUMO2) linkage. Serine 526 carries the post-translational modification Phosphoserine. Aspartate 528 bears the Phosphothreonine mark. Aspartate 533 carries the post-translational modification Phosphoserine. Residues 539-549 (QKAEREKERRV) show a composition bias toward basic and acidic residues. The bHLH domain occupies 546 to 599 (ERRVANNARERLRVRDINEAFKELGRMCQLHLSSEKPQTKLLILHQAVAVILSL). Residue lysine 622 forms a Glycyl lysine isopeptide (Lys-Gly) (interchain with G-Cter in SUMO2) linkage.

In terms of assembly, homodimer. Heterodimer; efficient DNA binding requires dimerization with another bHLH protein. Forms a heterodimer with TWIST1 and TWIST2. Forms a heterodimer with NEUROD1; the heterodimer is inhibited in presence of ID2, but not NR0B2, to E-box element. Forms a heterodimer with TCF15; the heterodimer binds E-box element. Forms a heterodimer with MYOG; heterodimerization enhances MYOG DNA-binding and transcriptional activities. Forms a heterodimer with ATOH8; repress transcription of TCF3 and TCF3-NEUROG3 dimer-induced transactivation of E box-dependent promoters. Component of a nuclear TAL-1 complex composed at least of CBFA2T3, LDB1, TAL1 and TCF3. Interacts with NEUROD2. Interacts with EP300. Interacts with PTF1A, TGFB1I1 and UBE2I. Interacts with BHLHA9. Interacts with ASB2; the interaction is mediated by SKP2 and targets TCF3 for Notch-induced proteasomal degradation. Interacts with transcription factor ASCL5/AmeloD. As to quaternary structure, forms a heterodimer with ATOH7; required for ATOH7 DNA-binding. Interacts with RALGAPA1. Interacts with FIGLA. Post-translationally, phosphorylated following NGF stimulation. In terms of processing, undergoes Notch-induced ubiquitination and subsequent proteasomal degradation which is mediated by ASB1 or ASB2, the substrate-recognition components of probable ECS E3 ubiquitin-protein ligase complexes.

Its subcellular location is the nucleus. Its function is as follows. Transcriptional regulator involved in the initiation of neuronal differentiation and mesenchymal to epithelial transition. Heterodimers between TCF3 and tissue-specific basic helix-loop-helix (bHLH) proteins play major roles in determining tissue-specific cell fate during embryogenesis, like muscle or early B-cell differentiation. Together with TCF15, required for the mesenchymal to epithelial transition. Dimers bind DNA on E-box motifs: 5'-CANNTG-3'. Binds to the kappa-E2 site in the kappa immunoglobulin gene enhancer. Binds to IEB1 and IEB2, which are short DNA sequences in the insulin gene transcription control region. Functionally, facilitates ATOH7 binding to DNA at the consensus sequence 5'-CAGGTG-3', and positively regulates transcriptional activity. The protein is Transcription factor E2-alpha (Tcf3) of Mus musculus (Mouse).